Consider the following 507-residue polypeptide: ATP synthase subunit alpha, chloroplastic (507 aa).

Residue 170–177 (GDRQTGKT) participates in ATP binding.

The protein belongs to the ATPase alpha/beta chains family. As to quaternary structure, F-type ATPases have 2 components, CF(1) - the catalytic core - and CF(0) - the membrane proton channel. CF(1) has five subunits: alpha(3), beta(3), gamma(1), delta(1), epsilon(1). CF(0) has four main subunits: a, b, b' and c.

The protein resides in the plastid. It localises to the chloroplast thylakoid membrane. It catalyses the reaction ATP + H2O + 4 H(+)(in) = ADP + phosphate + 5 H(+)(out). Produces ATP from ADP in the presence of a proton gradient across the membrane. The alpha chain is a regulatory subunit. In Ranunculus macranthus (Large buttercup), this protein is ATP synthase subunit alpha, chloroplastic.